The sequence spans 399 residues: Argininosuccinate synthase (399 aa).

8-16 serves as a coordination point for ATP; it reads AYSGGLDTS. L-citrulline-binding residues include Tyr-87 and Ser-92. Gly-117 serves as a coordination point for ATP. Thr-119, Asn-123, and Asp-124 together coordinate L-aspartate. Residue Asn-123 coordinates L-citrulline. Residues Arg-127, Ser-176, Ser-185, Glu-261, and Tyr-273 each contribute to the L-citrulline site.

The protein belongs to the argininosuccinate synthase family. Type 1 subfamily. Homotetramer.

The protein localises to the cytoplasm. The catalysed reaction is L-citrulline + L-aspartate + ATP = 2-(N(omega)-L-arginino)succinate + AMP + diphosphate + H(+). It functions in the pathway amino-acid biosynthesis; L-arginine biosynthesis; L-arginine from L-ornithine and carbamoyl phosphate: step 2/3. This is Argininosuccinate synthase from Clostridioides difficile (strain 630) (Peptoclostridium difficile).